A 165-amino-acid polypeptide reads, in one-letter code: Putative defense protein Hdd11 (165 aa).

Residues 1–17 form the signal peptide; it reads MWATYVFIAVSLACANG. Residues 18-165 form the Reelin domain; the sequence is YSSGAPESVC…VESGPVKVIS (148 aa). A disulfide bond links Cys-27 and Cys-104.

This sequence belongs to the insect defense protein family.

The protein resides in the secreted. Functionally, as this protein is expressed upon bacterial infection, it may have antimicrobial activity. The protein is Putative defense protein Hdd11 of Hyphantria cunea (Fall webworm moth).